We begin with the raw amino-acid sequence, 266 residues long: MRKNTYAMRYVAGQPAERILPPRSFASIGQALPAGEPLSSEERIRILVWNIFKQQRAEWLSVLKNYGKDAHLVLLQEAQTTPELVQFATANYLAADQVPAFVLPQHPSGVMTLSAAHPVYCCPLREREPILRLAKSALVTVYPLPDTRLLMVVNVHAVNFSLGVDVYSKQLLPIGDQIAHHSGPVIMAGDFNAWSRPRMNALYRFAREMSLRQVRFTDDQRRRAFGRPLDFVFYRGLNVNEASVLVTRASDHNPLLVEFSPGKPEQ.

It belongs to the UPF0294 family.

It is found in the cytoplasm. This Salmonella dublin (strain CT_02021853) protein is UPF0294 protein YafD.